Reading from the N-terminus, the 469-residue chain is Neuraminidase (469 aa).

At 1 to 9 (MNPNQKIIT) the chain is on the intravirion side. A helical transmembrane segment spans residues 10–30 (IGSVSLTIATICFLMQIAILV). Positions 11 to 33 (GSVSLTIATICFLMQIAILVTTV) are involved in apical transport and lipid raft association. Residues 31–469 (TTVTLHFKQY…DGADINLMPI (439 aa)) are Virion surface-facing. The segment at 36–88 (HFKQYECDSPANNQVMPCEPISIERNITEIVYLTNTTIEKEICPKLVEYRNWS) is hypervariable stalk region. N-linked (GlcNAc...) asparagine; by host glycosylation is found at Asn61, Asn70, and Asn86. Residues 91-469 (QCKITGFAPF…DGADINLMPI (379 aa)) form a head of neuraminidase region. Disulfide bonds link Cys92-Cys417, Cys124-Cys129, Cys183-Cys230, Cys232-Cys237, Cys278-Cys291, Cys280-Cys289, Cys318-Cys337, and Cys421-Cys447. Residue Arg118 coordinates substrate. The N-linked (GlcNAc...) asparagine; by host glycan is linked to Asn146. Asp151 functions as the Proton donor/acceptor in the catalytic mechanism. Residue Arg152 participates in substrate binding. 2 N-linked (GlcNAc...) asparagine; by host glycosylation sites follow: Asn200 and Asn234. A substrate-binding site is contributed by 276–277 (EE). Residue Arg292 coordinates substrate. Asp293, Gly297, and Asp324 together coordinate Ca(2+). Residue Arg371 coordinates substrate. N-linked (GlcNAc...) asparagine; by host glycosylation is present at Asn402. The Nucleophile role is filled by Tyr406.

The protein belongs to the glycosyl hydrolase 34 family. Homotetramer. Ca(2+) is required as a cofactor. Post-translationally, N-glycosylated.

Its subcellular location is the virion membrane. It is found in the host apical cell membrane. The catalysed reaction is Hydrolysis of alpha-(2-&gt;3)-, alpha-(2-&gt;6)-, alpha-(2-&gt;8)- glycosidic linkages of terminal sialic acid residues in oligosaccharides, glycoproteins, glycolipids, colominic acid and synthetic substrates.. With respect to regulation, inhibited by the neuraminidase inhibitors zanamivir (Relenza) and oseltamivir (Tamiflu). These drugs interfere with the release of progeny virus from infected cells and are effective against all influenza strains. Resistance to neuraminidase inhibitors is quite rare. Functionally, catalyzes the removal of terminal sialic acid residues from viral and cellular glycoconjugates. Cleaves off the terminal sialic acids on the glycosylated HA during virus budding to facilitate virus release. Additionally helps virus spread through the circulation by further removing sialic acids from the cell surface. These cleavages prevent self-aggregation and ensure the efficient spread of the progeny virus from cell to cell. Otherwise, infection would be limited to one round of replication. Described as a receptor-destroying enzyme because it cleaves a terminal sialic acid from the cellular receptors. May facilitate viral invasion of the upper airways by cleaving the sialic acid moieties on the mucin of the airway epithelial cells. Likely to plays a role in the budding process through its association with lipid rafts during intracellular transport. May additionally display a raft-association independent effect on budding. Plays a role in the determination of host range restriction on replication and virulence. Sialidase activity in late endosome/lysosome traffic seems to enhance virus replication. The chain is Neuraminidase from Aves (whales).